Here is a 365-residue protein sequence, read N- to C-terminus: UDP-N-acetylglucosamine--N-acetylmuramyl-(pentapeptide) pyrophosphoryl-undecaprenol N-acetylglucosamine transferase (365 aa).

UDP-N-acetyl-alpha-D-glucosamine contacts are provided by residues 17-19 (TGG), asparagine 129, arginine 167, serine 194, isoleucine 250, 269-274 (ALTVSE), and glutamine 295.

The protein belongs to the glycosyltransferase 28 family. MurG subfamily.

It localises to the cell inner membrane. It carries out the reaction di-trans,octa-cis-undecaprenyl diphospho-N-acetyl-alpha-D-muramoyl-L-alanyl-D-glutamyl-meso-2,6-diaminopimeloyl-D-alanyl-D-alanine + UDP-N-acetyl-alpha-D-glucosamine = di-trans,octa-cis-undecaprenyl diphospho-[N-acetyl-alpha-D-glucosaminyl-(1-&gt;4)]-N-acetyl-alpha-D-muramoyl-L-alanyl-D-glutamyl-meso-2,6-diaminopimeloyl-D-alanyl-D-alanine + UDP + H(+). It functions in the pathway cell wall biogenesis; peptidoglycan biosynthesis. Its function is as follows. Cell wall formation. Catalyzes the transfer of a GlcNAc subunit on undecaprenyl-pyrophosphoryl-MurNAc-pentapeptide (lipid intermediate I) to form undecaprenyl-pyrophosphoryl-MurNAc-(pentapeptide)GlcNAc (lipid intermediate II). This chain is UDP-N-acetylglucosamine--N-acetylmuramyl-(pentapeptide) pyrophosphoryl-undecaprenol N-acetylglucosamine transferase, found in Shewanella violacea (strain JCM 10179 / CIP 106290 / LMG 19151 / DSS12).